A 47-amino-acid chain; its full sequence is Putative protein PinH (47 aa).

A Resolvase/invertase-type recombinase catalytic domain is found at 1 to 47; that stretch reads MWHLVVLLEELCERGINFRALAQSIFAQQWGDECCKSKTICDLKVIV.

Belongs to the site-specific recombinase resolvase family.

This is Putative protein PinH (pinH) from Escherichia coli (strain K12).